The sequence spans 425 residues: Queuine tRNA-ribosyltransferase accessory subunit 2 (425 aa).

The segment at 302 to 323 (QNGAQDLEKNSPEEDQEEEVVK) is disordered. 4 residues coordinate Zn(2+): Cys-351, Cys-353, Cys-356, and His-382.

It belongs to the queuine tRNA-ribosyltransferase family. QTRT2 subfamily. Heterodimer of a catalytic subunit QTRT1 and an accessory subunit QTRT2. The cofactor is Zn(2+).

Its subcellular location is the cytoplasm. The protein resides in the mitochondrion outer membrane. Its function is as follows. Non-catalytic subunit of the queuine tRNA-ribosyltransferase (TGT) that catalyzes the base-exchange of a guanine (G) residue with queuine (Q) at position 34 (anticodon wobble position) in tRNAs with GU(N) anticodons (tRNA-Asp, -Asn, -His and -Tyr), resulting in the hypermodified nucleoside queuosine (7-(((4,5-cis-dihydroxy-2-cyclopenten-1-yl)amino)methyl)-7-deazaguanosine). The sequence is that of Queuine tRNA-ribosyltransferase accessory subunit 2 from Gallus gallus (Chicken).